The chain runs to 206 residues: ATP-dependent Clp protease proteolytic subunit (206 aa).

The active-site Nucleophile is the serine 108. Histidine 133 is a catalytic residue.

The protein belongs to the peptidase S14 family. As to quaternary structure, fourteen ClpP subunits assemble into 2 heptameric rings which stack back to back to give a disk-like structure with a central cavity, resembling the structure of eukaryotic proteasomes.

It localises to the cytoplasm. It catalyses the reaction Hydrolysis of proteins to small peptides in the presence of ATP and magnesium. alpha-casein is the usual test substrate. In the absence of ATP, only oligopeptides shorter than five residues are hydrolyzed (such as succinyl-Leu-Tyr-|-NHMec, and Leu-Tyr-Leu-|-Tyr-Trp, in which cleavage of the -Tyr-|-Leu- and -Tyr-|-Trp bonds also occurs).. In terms of biological role, cleaves peptides in various proteins in a process that requires ATP hydrolysis. Has a chymotrypsin-like activity. Plays a major role in the degradation of misfolded proteins. The chain is ATP-dependent Clp protease proteolytic subunit from Chromohalobacter salexigens (strain ATCC BAA-138 / DSM 3043 / CIP 106854 / NCIMB 13768 / 1H11).